A 641-amino-acid polypeptide reads, in one-letter code: ATP-dependent DNA helicase PIF1 (641 aa).

The PINT stretch occupies residues 1 to 180 (MLSGIEAAAG…LVKRPVEPQA (180 aa)). Ser-27 and Ser-151 each carry phosphoserine. Residues 167–641 (PDTTLVKRPV…SDQENMDPIL (475 aa)) form a hydrolyzes ATP in the presence of both magnesium and single-stranded DNA; weak activity in the presence of RNA or double-stranded DNA; No unwinding activity region. Residues 173-192 (KRPVEPQAGAEPSTEAPRWP) are disordered. 228–235 (GSAGTGKS) is a binding site for ATP. The DNA-binding element occupies 577–596 (QAYVALSRARSLQGLRVLDF). The segment at 622-641 (LESPDDDEAASDQENMDPIL) is disordered. Residues 624 to 641 (SPDDDEAASDQENMDPIL) are compositionally biased toward acidic residues.

Belongs to the helicase family. PIF1 subfamily. Monomer. Interacts with telomerase. Mg(2+) serves as cofactor. In terms of tissue distribution, weak ubiquitous expression.

The protein resides in the nucleus. It localises to the mitochondrion. The enzyme catalyses Couples ATP hydrolysis with the unwinding of duplex DNA at the replication fork by translocating in the 5'-3' direction. This creates two antiparallel DNA single strands (ssDNA). The leading ssDNA polymer is the template for DNA polymerase III holoenzyme which synthesizes a continuous strand.. It catalyses the reaction ATP + H2O = ADP + phosphate + H(+). In terms of biological role, DNA-dependent ATPase and 5'-3' DNA helicase required for the maintenance of both mitochondrial and nuclear genome stability. Efficiently unwinds G-quadruplex (G4) DNA structures and forked RNA-DNA hybrids. Resolves G4 structures, preventing replication pausing and double-strand breaks (DSBs) at G4 motifs. Involved in the maintenance of telomeric DNA. Inhibits telomere elongation, de novo telomere formation and telomere addition to DSBs via catalytic inhibition of telomerase. Reduces the processivity of telomerase by displacing active telomerase from DNA ends. Releases telomerase by unwinding the short telomerase RNA/telomeric DNA hybrid that is the intermediate in the telomerase reaction. Possesses an intrinsic strand annealing activity. The sequence is that of ATP-dependent DNA helicase PIF1 from Homo sapiens (Human).